Here is a 276-residue protein sequence, read N- to C-terminus: Putative pyridoxine kinase (276 aa).

N139 is a binding site for ATP. Position 142 (E142) interacts with Mg(2+). Residues K176–A180, D188, G213, and K238 contribute to the ATP site.

It belongs to the ThiD family.

It carries out the reaction pyridoxal + ATP = pyridoxal 5'-phosphate + ADP + H(+). Phosphorylates B6 vitamers; functions in a salvage pathway. Uses pyridoxal, pyridoxine, and pyridoxamine as substrates. This is Putative pyridoxine kinase (pdxK) from Staphylococcus epidermidis (strain ATCC 35984 / DSM 28319 / BCRC 17069 / CCUG 31568 / BM 3577 / RP62A).